Reading from the N-terminus, the 191-residue chain is Prostaglandin-H2 D-isomerase (191 aa).

A signal peptide spans 1-28 (MATPNRLWMALLLLGVLGVLQTPAPAQA). Asn51 is a glycosylation site (N-linked (GlcNAc...) asparagine). Cys65 functions as the Nucleophile in the catalytic mechanism. Asn78 carries an N-linked (GlcNAc...) asparagine glycan. The cysteines at positions 89 and 186 are disulfide-linked.

It belongs to the calycin superfamily. Lipocalin family. As to quaternary structure, monomer. In terms of tissue distribution, in the male reproductive system, expressed in the testis, epididymis and prostate, and secreted into the seminal fluid.

The protein resides in the rough endoplasmic reticulum. Its subcellular location is the nucleus membrane. It is found in the golgi apparatus. The protein localises to the cytoplasm. It localises to the perinuclear region. The protein resides in the secreted. The enzyme catalyses prostaglandin H2 = prostaglandin D2. Functionally, catalyzes the conversion of PGH2 to PGD2, a prostaglandin involved in smooth muscle contraction/relaxation and a potent inhibitor of platelet aggregation. Involved in a variety of CNS functions, such as sedation, NREM sleep and PGE2-induced allodynia, and may have an anti-apoptotic role in oligodendrocytes. Binds small non-substrate lipophilic molecules, including biliverdin, bilirubin, retinal, retinoic acid and thyroid hormone, and may act as a scavenger for harmful hydrophobic molecules and as a secretory retinoid and thyroid hormone transporter. Possibly involved in development and maintenance of the blood-brain, blood-retina, blood-aqueous humor and blood-testis barrier. It is likely to play important roles in both maturation and maintenance of the central nervous system and male reproductive system. Involved in PLA2G3-dependent maturation of mast cells. PLA2G3 is secreted by immature mast cells and acts on nearby fibroblasts upstream to PTDGS to synthesize PGD2, which in turn promotes mast cell maturation and degranulation via PTGDR. The sequence is that of Prostaglandin-H2 D-isomerase (PTGDS) from Bos taurus (Bovine).